A 280-amino-acid polypeptide reads, in one-letter code: Eukaryotic translation initiation factor 3 subunit F-1 (280 aa).

An MPN domain is found at 8-138 (VRVHPVVLFQ…LRAYVCIQLG (131 aa)).

Belongs to the eIF-3 subunit F family. Component of the eukaryotic translation initiation factor 3 (eIF-3) complex. The eIF-3 complex interacts with pix.

The protein localises to the cytoplasm. In terms of biological role, component of the eukaryotic translation initiation factor 3 (eIF-3) complex, which is involved in protein synthesis of a specialized repertoire of mRNAs and, together with other initiation factors, stimulates binding of mRNA and methionyl-tRNAi to the 40S ribosome. The eIF-3 complex specifically targets and initiates translation of a subset of mRNAs involved in cell proliferation. The protein is Eukaryotic translation initiation factor 3 subunit F-1 of Drosophila ananassae (Fruit fly).